A 139-amino-acid chain; its full sequence is D-ribose pyranase (139 aa).

Residue H20 is the Proton donor of the active site. Residues D28, H106, and 128-130 contribute to the substrate site; that span reads YAN.

This sequence belongs to the RbsD / FucU family. RbsD subfamily. As to quaternary structure, homodecamer.

It localises to the cytoplasm. The enzyme catalyses beta-D-ribopyranose = beta-D-ribofuranose. It functions in the pathway carbohydrate metabolism; D-ribose degradation; D-ribose 5-phosphate from beta-D-ribopyranose: step 1/2. Catalyzes the interconversion of beta-pyran and beta-furan forms of D-ribose. The sequence is that of D-ribose pyranase from Photorhabdus laumondii subsp. laumondii (strain DSM 15139 / CIP 105565 / TT01) (Photorhabdus luminescens subsp. laumondii).